Reading from the N-terminus, the 277-residue chain is MAPLRFSANLSWLFPELSGLPARVRAAGSSGFEAVEVAWPYAETPEALARAAREAGLRLVLINTPPGDQEKGEMGLGAVPGRQAAFREGLEQAVRYAKALGCPRIHLMAGRVPQGADRIAVKAEMEAVFLENLRHAAGVLAQEDLVGLLEPINTRITDPQYFLDTPQQAAAILQKVGRPNLQLQMDIFHWQIMDGNLTGNIREFLPIVGHVQVAQVPGRGEPSSPGELNFPYLFQLLEDEGYKGFVGCEYQPRGDTVEGLSWLRSYWDRRGHPEAGQ.

Active-site proton donor/acceptor residues include glutamate 150 and glutamate 249.

The protein belongs to the hyi family.

The catalysed reaction is 3-hydroxypyruvate = 2-hydroxy-3-oxopropanoate. Functionally, catalyzes the reversible isomerization between hydroxypyruvate and 2-hydroxy-3-oxopropanoate (also termed tartronate semialdehyde). This is Putative hydroxypyruvate isomerase (HYI) from Homo sapiens (Human).